The chain runs to 175 residues: Large ribosomal subunit protein uL10 (175 aa).

Belongs to the universal ribosomal protein uL10 family. As to quaternary structure, part of the ribosomal stalk of the 50S ribosomal subunit. The N-terminus interacts with L11 and the large rRNA to form the base of the stalk. The C-terminus forms an elongated spine to which L12 dimers bind in a sequential fashion forming a multimeric L10(L12)X complex.

In terms of biological role, forms part of the ribosomal stalk, playing a central role in the interaction of the ribosome with GTP-bound translation factors. In Prochlorococcus marinus (strain MIT 9515), this protein is Large ribosomal subunit protein uL10.